The primary structure comprises 327 residues: Phenylalanine--tRNA ligase alpha subunit (327 aa).

Glu252 is a Mg(2+) binding site.

Belongs to the class-II aminoacyl-tRNA synthetase family. Phe-tRNA synthetase alpha subunit type 1 subfamily. In terms of assembly, tetramer of two alpha and two beta subunits. Mg(2+) is required as a cofactor.

The protein localises to the cytoplasm. It catalyses the reaction tRNA(Phe) + L-phenylalanine + ATP = L-phenylalanyl-tRNA(Phe) + AMP + diphosphate + H(+). The sequence is that of Phenylalanine--tRNA ligase alpha subunit from Sodalis glossinidius (strain morsitans).